A 284-amino-acid polypeptide reads, in one-letter code: Nucleotide-binding protein VF_0384 (284 aa).

8–15 is an ATP binding site; the sequence is GSSGAGKS. 56–59 is a binding site for GTP; sequence DIRN.

The protein belongs to the RapZ-like family.

Functionally, displays ATPase and GTPase activities. The polypeptide is Nucleotide-binding protein VF_0384 (Aliivibrio fischeri (strain ATCC 700601 / ES114) (Vibrio fischeri)).